The sequence spans 454 residues: 3-phosphoshikimate 1-carboxyvinyltransferase (454 aa).

Positions 1 to 31 (MSENHSEGASRPVISRRPAAGLRADHPVHVP) are disordered. 3-phosphoshikimate contacts are provided by lysine 34, serine 35, and arginine 39. Lysine 34 serves as a coordination point for phosphoenolpyruvate. Phosphoenolpyruvate is bound by residues glycine 107 and arginine 135. Serine 180, glutamine 182, aspartate 334, and lysine 361 together coordinate 3-phosphoshikimate. Glutamine 182 is a binding site for phosphoenolpyruvate. The active-site Proton acceptor is the aspartate 334. Phosphoenolpyruvate is bound by residues arginine 365 and arginine 409.

The protein belongs to the EPSP synthase family. In terms of assembly, monomer.

The protein localises to the cytoplasm. It carries out the reaction 3-phosphoshikimate + phosphoenolpyruvate = 5-O-(1-carboxyvinyl)-3-phosphoshikimate + phosphate. It functions in the pathway metabolic intermediate biosynthesis; chorismate biosynthesis; chorismate from D-erythrose 4-phosphate and phosphoenolpyruvate: step 6/7. Catalyzes the transfer of the enolpyruvyl moiety of phosphoenolpyruvate (PEP) to the 5-hydroxyl of shikimate-3-phosphate (S3P) to produce enolpyruvyl shikimate-3-phosphate and inorganic phosphate. The protein is 3-phosphoshikimate 1-carboxyvinyltransferase of Granulibacter bethesdensis (strain ATCC BAA-1260 / CGDNIH1).